The following is a 342-amino-acid chain: Anthranilate phosphoribosyltransferase (342 aa).

Residues G80, 83–84 (GD), T88, 90–93 (NIST), 108–116 (KHGNRAVSS), and S120 contribute to the 5-phospho-alpha-D-ribose 1-diphosphate site. G80 provides a ligand contact to anthranilate. S92 is a Mg(2+) binding site. N111 contributes to the anthranilate binding site. Residue R166 participates in anthranilate binding. 2 residues coordinate Mg(2+): D225 and E226.

This sequence belongs to the anthranilate phosphoribosyltransferase family. Homodimer. Requires Mg(2+) as cofactor.

It carries out the reaction N-(5-phospho-beta-D-ribosyl)anthranilate + diphosphate = 5-phospho-alpha-D-ribose 1-diphosphate + anthranilate. It participates in amino-acid biosynthesis; L-tryptophan biosynthesis; L-tryptophan from chorismate: step 2/5. Catalyzes the transfer of the phosphoribosyl group of 5-phosphorylribose-1-pyrophosphate (PRPP) to anthranilate to yield N-(5'-phosphoribosyl)-anthranilate (PRA). This chain is Anthranilate phosphoribosyltransferase, found in Halalkalibacterium halodurans (strain ATCC BAA-125 / DSM 18197 / FERM 7344 / JCM 9153 / C-125) (Bacillus halodurans).